The chain runs to 445 residues: tRNA-2-methylthio-N(6)-dimethylallyladenosine synthase (445 aa).

The 117-residue stretch at 9 to 125 (LKYRILTYGC…LPYLIARAKE (117 aa)) folds into the MTTase N-terminal domain. Residues C18, C54, C88, C162, C166, and C169 each coordinate [4Fe-4S] cluster. Positions 148 to 378 (RKPGLSAFVN…NRRQYQIATE (231 aa)) constitute a Radical SAM core domain. The region spanning 381–444 (QELQGSIQEV…TFSLFGEIFN (64 aa)) is the TRAM domain.

The protein belongs to the methylthiotransferase family. MiaB subfamily. As to quaternary structure, monomer. [4Fe-4S] cluster is required as a cofactor.

It localises to the cytoplasm. It catalyses the reaction N(6)-dimethylallyladenosine(37) in tRNA + (sulfur carrier)-SH + AH2 + 2 S-adenosyl-L-methionine = 2-methylsulfanyl-N(6)-dimethylallyladenosine(37) in tRNA + (sulfur carrier)-H + 5'-deoxyadenosine + L-methionine + A + S-adenosyl-L-homocysteine + 2 H(+). Its function is as follows. Catalyzes the methylthiolation of N6-(dimethylallyl)adenosine (i(6)A), leading to the formation of 2-methylthio-N6-(dimethylallyl)adenosine (ms(2)i(6)A) at position 37 in tRNAs that read codons beginning with uridine. This is tRNA-2-methylthio-N(6)-dimethylallyladenosine synthase from Syntrophomonas wolfei subsp. wolfei (strain DSM 2245B / Goettingen).